A 183-amino-acid chain; its full sequence is NADH-quinone oxidoreductase subunit A (183 aa).

Transmembrane regions (helical) follow at residues 11-31 (IIAF…VPLL), 63-83 (FYLV…LYAW), and 98-118 (MVIF…TGAL). The disordered stretch occupies residues 160–183 (GHIPAQSSGRMKSKTSTAPSSKQE). A compositionally biased stretch (polar residues) spans 164 to 183 (AQSSGRMKSKTSTAPSSKQE).

Belongs to the complex I subunit 3 family. NDH-1 is composed of 14 different subunits. Subunits NuoA, H, J, K, L, M, N constitute the membrane sector of the complex.

Its subcellular location is the cell inner membrane. The enzyme catalyses a quinone + NADH + 5 H(+)(in) = a quinol + NAD(+) + 4 H(+)(out). Its function is as follows. NDH-1 shuttles electrons from NADH, via FMN and iron-sulfur (Fe-S) centers, to quinones in the respiratory chain. The immediate electron acceptor for the enzyme in this species is believed to be ubiquinone. Couples the redox reaction to proton translocation (for every two electrons transferred, four hydrogen ions are translocated across the cytoplasmic membrane), and thus conserves the redox energy in a proton gradient. This is NADH-quinone oxidoreductase subunit A from Acinetobacter baylyi (strain ATCC 33305 / BD413 / ADP1).